The sequence spans 193 residues: Shikimate kinase (193 aa).

An ATP-binding site is contributed by glycine 31–threonine 36. Residue threonine 35 participates in Mg(2+) binding. Substrate contacts are provided by aspartate 53, arginine 77, and glycine 103. Arginine 141 serves as a coordination point for ATP. A substrate-binding site is contributed by arginine 160. Glutamine 176 lines the ATP pocket.

It belongs to the shikimate kinase family. In terms of assembly, monomer. Requires Mg(2+) as cofactor.

Its subcellular location is the cytoplasm. The catalysed reaction is shikimate + ATP = 3-phosphoshikimate + ADP + H(+). Its pathway is metabolic intermediate biosynthesis; chorismate biosynthesis; chorismate from D-erythrose 4-phosphate and phosphoenolpyruvate: step 5/7. Its function is as follows. Catalyzes the specific phosphorylation of the 3-hydroxyl group of shikimic acid using ATP as a cosubstrate. The protein is Shikimate kinase of Novosphingobium aromaticivorans (strain ATCC 700278 / DSM 12444 / CCUG 56034 / CIP 105152 / NBRC 16084 / F199).